The chain runs to 530 residues: Autoinducer-2 kinase (530 aa).

The protein belongs to the FGGY kinase family.

It localises to the cytoplasm. It catalyses the reaction (S)-4,5-dihydroxypentane-2,3-dione + ATP = (2S)-2-hydroxy-3,4-dioxopentyl phosphate + ADP + H(+). Its function is as follows. Catalyzes the phosphorylation of autoinducer-2 (AI-2) to phospho-AI-2, which subsequently inactivates the transcriptional regulator LsrR and leads to the transcription of the lsr operon. Phosphorylates the ring-open form of (S)-4,5-dihydroxypentane-2,3-dione (DPD), which is the precursor to all AI-2 signaling molecules, at the C5 position. The protein is Autoinducer-2 kinase of Salmonella paratyphi A (strain ATCC 9150 / SARB42).